The following is an 86-amino-acid chain: MKKLLIVSVKAYQKYISPLSPPSCRYKPTCSAYMLTAIEKHGTKGILMGIARILRCHPFVAGGVDPVPEDFSLMRNKNTSKNAEKA.

It belongs to the UPF0161 family.

It localises to the cell membrane. Functionally, could be involved in insertion of integral membrane proteins into the membrane. This is Putative membrane protein insertion efficiency factor from Streptococcus pyogenes serotype M1.